The primary structure comprises 578 residues: Phosphoenolpyruvate-protein phosphotransferase (578 aa).

Residue His195 is the Tele-phosphohistidine intermediate of the active site. Phosphoenolpyruvate is bound by residues Arg302 and Arg338. Residues Glu437 and Asp461 each contribute to the Mg(2+) site. Phosphoenolpyruvate is bound by residues 460-461 and Arg471; that span reads ND. Cys508 serves as the catalytic Proton donor.

The protein belongs to the PEP-utilizing enzyme family. As to quaternary structure, homodimer. The cofactor is Mg(2+).

The protein localises to the cytoplasm. It catalyses the reaction L-histidyl-[protein] + phosphoenolpyruvate = N(pros)-phospho-L-histidyl-[protein] + pyruvate. Its function is as follows. General (non sugar-specific) component of the phosphoenolpyruvate-dependent sugar phosphotransferase system (sugar PTS). This major carbohydrate active-transport system catalyzes the phosphorylation of incoming sugar substrates concomitantly with their translocation across the cell membrane. Enzyme I transfers the phosphoryl group from phosphoenolpyruvate (PEP) to the phosphoryl carrier protein (HPr). The polypeptide is Phosphoenolpyruvate-protein phosphotransferase (ptsI) (Geobacillus stearothermophilus (Bacillus stearothermophilus)).